A 247-amino-acid chain; its full sequence is Cell division protein ZapD (247 aa).

It belongs to the ZapD family. Interacts with FtsZ.

It is found in the cytoplasm. In terms of biological role, cell division factor that enhances FtsZ-ring assembly. Directly interacts with FtsZ and promotes bundling of FtsZ protofilaments, with a reduction in FtsZ GTPase activity. The chain is Cell division protein ZapD from Shigella boydii serotype 4 (strain Sb227).